Consider the following 94-residue polypeptide: Large ribosomal subunit protein bL25 (94 aa).

This sequence belongs to the bacterial ribosomal protein bL25 family. Part of the 50S ribosomal subunit; part of the 5S rRNA/L5/L18/L25 subcomplex. Contacts the 5S rRNA. Binds to the 5S rRNA independently of L5 and L18.

This is one of the proteins that binds to the 5S RNA in the ribosome where it forms part of the central protuberance. The protein is Large ribosomal subunit protein bL25 of Salmonella arizonae (strain ATCC BAA-731 / CDC346-86 / RSK2980).